Here is a 351-residue protein sequence, read N- to C-terminus: Dihydroorotate dehydrogenase (quinone) (351 aa).

FMN is bound by residues 61–65 and threonine 85; that span reads AGLDK. Lysine 65 is a binding site for substrate. 110 to 114 is a binding site for substrate; that stretch reads NRMGF. FMN-binding residues include asparagine 139 and asparagine 172. Substrate is bound at residue asparagine 172. The active-site Nucleophile is serine 175. Asparagine 177 provides a ligand contact to substrate. Positions 217 and 245 each coordinate FMN. 246–247 serves as a coordination point for substrate; the sequence is NT. Residues glycine 268, glycine 297, and 318–319 contribute to the FMN site; that span reads YS.

Belongs to the dihydroorotate dehydrogenase family. Type 2 subfamily. As to quaternary structure, monomer. The cofactor is FMN.

It is found in the cell membrane. It carries out the reaction (S)-dihydroorotate + a quinone = orotate + a quinol. Its pathway is pyrimidine metabolism; UMP biosynthesis via de novo pathway; orotate from (S)-dihydroorotate (quinone route): step 1/1. Its function is as follows. Catalyzes the conversion of dihydroorotate to orotate with quinone as electron acceptor. This chain is Dihydroorotate dehydrogenase (quinone), found in Stenotrophomonas maltophilia (strain R551-3).